Here is a 350-residue protein sequence, read N- to C-terminus: Trans-enoyl reductase iliB (350 aa).

50–53 (VDGK) is a binding site for NADP(+). 145–152 (AAIATVGL) is a binding site for substrate. NADP(+) is bound by residues 177–180 (SAAS), tyrosine 195, and 242–243 (LD). 262 to 266 (TPTQF) contributes to the substrate binding site. An NADP(+)-binding site is contributed by 331–332 (IK).

The protein belongs to the zinc-containing alcohol dehydrogenase family. In terms of assembly, monomer.

The enzyme catalyses N-[(4E,6E,10S,12Z,14E)-6,10-dimethyl-3-oxohexadeca-4,6,12,14-tetraenoyl]-L-tyrosyl-[ACP] = (3E,5S)-3-[(2E,4E,8S,10E,12Z)-1-hydroxy-4,8-dimethyltetradeca-2,4,10,12-tetraen-1-ylidene]-5-[(4-hydroxyphenyl)methyl]pyrrolidine-2,4-dione + holo-[ACP] + H(+). The protein operates within mycotoxin biosynthesis. Its function is as follows. Trans-enoyl reductase; part of the gene cluster that mediates the biosynthesis of ilicicolin H, a 4-hydroxy-2-pyridonealkaloid that has potent and broad antifungal activities by inhibiting the mitochondrial respiration chain. IliB collaborates with the hybrid PKS-NRPS synthetase iliA to assemble the backbone of ilicicolin H. The PKS portion of iliA and trans-acting enoyl reductase iliB work together to construct an octaketide, and two methyl groups are introduced by the MT domain of iliA during the chain assembly. The nascent chain is then condensed with tyrosine, catalyzed by the iliA C domain, and the resulting PKS-NRPS hybrid is offloaded by the iliA RED domain to form an advanced tetramic acid intermediate. The biosynthesis of ilicicolin H starts with formation of the tetramic acid by the hybrid PKS-NRPS synthetase iliA with the partnering trans-enoyl reductase iliB since iliA lacks a designated enoylreductase (ER) domain. The cytochrome P450 monooxygenase iliC then catalyzes the ring expansion of the tetramate to the acyclic 2-pyridone. The pericyclase iliD further converts the acyclic 2-pyridone into 8-epi-ilicicolin H. 8-epi-ilicicolin H might then spontaneously convert to ilicicolin H since ilicicolin H is produced in the absence of the epimerase iliE, in contrast to what was observed for the Talaromyces variabilis ilicolin H biosynthetic pathway. This is Trans-enoyl reductase iliB from Hypocrea jecorina (strain QM6a) (Trichoderma reesei).